A 492-amino-acid chain; its full sequence is Cytochrome P450 26A1 (492 aa).

Heme is bound at residue Cys437.

It belongs to the cytochrome P450 family. Heme is required as a cofactor. Expressed primarily in ovary, brain and eyes.

The protein resides in the endoplasmic reticulum membrane. It localises to the microsome membrane. It catalyses the reaction all-trans-retinoate + reduced [NADPH--hemoprotein reductase] + O2 = all-trans-(4S)-hydroxyretinoate + oxidized [NADPH--hemoprotein reductase] + H2O + H(+). A cytochrome P450 monooxygenase involved in the metabolism of all-trans retinoic acid (atRA), a signaling molecule that binds to retinoic acid receptors and regulates gene transcription. May regulate at-RA signaling during hindbrain development. Mechanistically, uses molecular oxygen inserting one oxygen atom into a substrate, and reducing the second into a water molecule, with two electrons provided by NADPH via cytochrome P450 reductase (CPR; NADPH-ferrihemoprotein reductase). Catalyzes the hydroxylation of carbon hydrogen bonds of atRA primarily at C-4. Has no activity toward 9-cis and 13-cis retinoic acid stereoisomers. May play a role in the oxidative metabolism of xenobiotics such as tazarotenic acid. The sequence is that of Cytochrome P450 26A1 (cyp26a1) from Xenopus laevis (African clawed frog).